The chain runs to 311 residues: Methionyl-tRNA formyltransferase (311 aa).

110–113 (SLLP) is a (6S)-5,6,7,8-tetrahydrofolate binding site.

It belongs to the Fmt family.

It carries out the reaction L-methionyl-tRNA(fMet) + (6R)-10-formyltetrahydrofolate = N-formyl-L-methionyl-tRNA(fMet) + (6S)-5,6,7,8-tetrahydrofolate + H(+). Attaches a formyl group to the free amino group of methionyl-tRNA(fMet). The formyl group appears to play a dual role in the initiator identity of N-formylmethionyl-tRNA by promoting its recognition by IF2 and preventing the misappropriation of this tRNA by the elongation apparatus. In Streptococcus sanguinis (strain SK36), this protein is Methionyl-tRNA formyltransferase.